An 817-amino-acid polypeptide reads, in one-letter code: DNA-directed RNA polymerase subunit beta'' (817 aa).

4 residues coordinate Zn(2+): C219, C291, C298, and C301.

This sequence belongs to the RNA polymerase beta' chain family. RpoC2 subfamily. In plastids the minimal PEP RNA polymerase catalytic core is composed of four subunits: alpha, beta, beta', and beta''. When a (nuclear-encoded) sigma factor is associated with the core the holoenzyme is formed, which can initiate transcription. Requires Zn(2+) as cofactor.

It localises to the plastid. It carries out the reaction RNA(n) + a ribonucleoside 5'-triphosphate = RNA(n+1) + diphosphate. Functionally, DNA-dependent RNA polymerase catalyzes the transcription of DNA into RNA using the four ribonucleoside triphosphates as substrates. The protein is DNA-directed RNA polymerase subunit beta'' (rpoC2) of Euglena longa (Euglenophycean alga).